Here is a 301-residue protein sequence, read N- to C-terminus: NADH-cytochrome b5 reductase 3 (301 aa).

Residue Gly-2 is the site of N-myristoyl glycine attachment. The region spanning 40–152 is the FAD-binding FR-type domain; sequence DIKYSLRLID…RGPNGLLVYQ (113 aa). Position 42 is an N6-acetyllysine (Lys-42). At Tyr-43 the chain carries Phosphotyrosine. FAD is bound by residues Arg-92, Pro-93, Tyr-94, Val-109, Lys-111, and Phe-114. An N6-acetyllysine modification is found at Lys-120. Residues Lys-126, Met-127, Ser-128, and Thr-185 each coordinate FAD.

The protein belongs to the flavoprotein pyridine nucleotide cytochrome reductase family. Component of a complex composed of cytochrome b5, NADH-cytochrome b5 reductase (CYB5R3) and MTARC2. Interacts with MTLN; the interaction is required to maintain cellular lipid composition and leads to stimulation of mitochondrial respiratory complex I activity. It depends on FAD as a cofactor.

It localises to the endoplasmic reticulum membrane. The protein localises to the mitochondrion outer membrane. It catalyses the reaction 2 Fe(III)-[cytochrome b5] + NADH = 2 Fe(II)-[cytochrome b5] + NAD(+) + H(+). Catalyzes the reduction of two molecules of cytochrome b5 using NADH as the electron donor. The polypeptide is NADH-cytochrome b5 reductase 3 (CYB5R3) (Macaca fascicularis (Crab-eating macaque)).